A 199-amino-acid polypeptide reads, in one-letter code: NAD(P)H dehydrogenase (quinone) (199 aa).

Residues 4 to 190 form the Flavodoxin-like domain; sequence VLVLYYSAYG…DGARYQGRKI (187 aa). Residues 10 to 15 and 78 to 80 contribute to the FMN site; these read SAYGHI and TRF. NAD(+) is bound at residue Tyr12. Trp98 serves as a coordination point for substrate. Residues 113-119 and His134 contribute to the FMN site; that span reads STATQHG.

Belongs to the WrbA family. FMN is required as a cofactor.

It catalyses the reaction a quinone + NADH + H(+) = a quinol + NAD(+). It carries out the reaction a quinone + NADPH + H(+) = a quinol + NADP(+). The chain is NAD(P)H dehydrogenase (quinone) from Xanthobacter autotrophicus (strain ATCC BAA-1158 / Py2).